Reading from the N-terminus, the 86-residue chain is Small ribosomal subunit protein bS20 (86 aa).

The protein belongs to the bacterial ribosomal protein bS20 family.

Its function is as follows. Binds directly to 16S ribosomal RNA. This is Small ribosomal subunit protein bS20 from Pelagibacter ubique (strain HTCC1062).